The chain runs to 397 residues: Cathepsin E-B (397 aa).

An N-terminal signal peptide occupies residues 1–16; that stretch reads MRQILVLLLFVTLVYG. Positions 17 to 49 are cleaved as a propeptide — activation peptide; that stretch reads LIRVPLKRQKSIRKTPKEKGKLSHVWTQQGIDM. A Peptidase A1 domain is found at 74–385; sequence YFGEISIGTP…DRGNNRVGLA (312 aa). Asn-86 is a glycosylation site (N-linked (GlcNAc...) asparagine). Asp-92 is an active-site residue. Residues Cys-105 and Cys-110 are joined by a disulfide bond. N-linked (GlcNAc...) asparagine glycosylation is present at Asn-130. A disulfide bridge connects residues Cys-268 and Cys-272. Asp-277 is a catalytic residue. The cysteines at positions 310 and 344 are disulfide-linked.

Belongs to the peptidase A1 family. Homodimer; disulfide-linked. Glycosylated. Contains high mannose-type oligosaccharide. As to expression, expressed predominantly in the anterior and posterior adult stomach and at much lower levels in the larval foregut.

It is found in the endosome. The enzyme catalyses Similar to cathepsin D, but slightly broader specificity.. Functionally, may have a role in immune function. Probably involved in the processing of antigenic peptides during MHC class II-mediated antigen presentation. The chain is Cathepsin E-B (ctse-b) from Xenopus laevis (African clawed frog).